A 437-amino-acid chain; its full sequence is Epsilon-sarcoglycan (437 aa).

Topologically, residues 1 to 317 are extracellular; that stretch reads MLLFWWWELG…LKSRDYYTDF (317 aa). Asparagine 200 carries N-linked (GlcNAc...) asparagine glycosylation. A helical transmembrane segment spans residues 318 to 338; the sequence is LVTLAVPSAVALVLFLILAYI. Topologically, residues 339–437 are cytoplasmic; the sequence is MCCRREGVEK…QPQTTGKWYP (99 aa).

It belongs to the sarcoglycan alpha/epsilon family. Post-translationally, N-glycosylated. Ubiquitinated, leading to its degradation by the proteasome. As to expression, identified in all tissues tested. Expression highest in lung and placenta, moderate in brain, heart and skeletal muscle, low in kidney and liver. Also detected in embryo.

Its subcellular location is the cell membrane. It is found in the sarcolemma. It localises to the golgi apparatus. The protein localises to the cell projection. The protein resides in the dendrite. Its subcellular location is the cytoplasm. It is found in the cytoskeleton. In terms of biological role, component of the sarcoglycan complex, a subcomplex of the dystrophin-glycoprotein complex which forms a link between the F-actin cytoskeleton and the extracellular matrix. The polypeptide is Epsilon-sarcoglycan (Sgce) (Mus musculus (Mouse)).